Here is a 243-residue protein sequence, read N- to C-terminus: NEDD4-binding protein 2-like 1 (243 aa).

A disordered region spans residues 1 to 38 (MEDSFLQSFGRLSLQPQQQQQRQRPPRPPPRGTPPRRH).

Interacts with dynactin subunit proteins, including DCTN4, DCTN5 and DCTN5.

Functionally, might play a role in adipocyte differentiation and triglyceride accumulation. This chain is NEDD4-binding protein 2-like 1 (N4BP2L1), found in Homo sapiens (Human).